We begin with the raw amino-acid sequence, 206 residues long: Large ribosomal subunit protein uL4 (206 aa).

The protein belongs to the universal ribosomal protein uL4 family. Part of the 50S ribosomal subunit.

Functionally, one of the primary rRNA binding proteins, this protein initially binds near the 5'-end of the 23S rRNA. It is important during the early stages of 50S assembly. It makes multiple contacts with different domains of the 23S rRNA in the assembled 50S subunit and ribosome. In terms of biological role, forms part of the polypeptide exit tunnel. This is Large ribosomal subunit protein uL4 from Bradyrhizobium sp. (strain ORS 278).